Reading from the N-terminus, the 611-residue chain is Dihydroxy-acid dehydratase (611 aa).

Asp81 is a binding site for Mg(2+). Position 122 (Cys122) interacts with [2Fe-2S] cluster. Positions 123 and 124 each coordinate Mg(2+). The residue at position 124 (Lys124) is an N6-carboxylysine. Cys195 contributes to the [2Fe-2S] cluster binding site. Glu491 contacts Mg(2+). Catalysis depends on Ser517, which acts as the Proton acceptor.

The protein belongs to the IlvD/Edd family. As to quaternary structure, homodimer. [2Fe-2S] cluster serves as cofactor. Mg(2+) is required as a cofactor.

It catalyses the reaction (2R)-2,3-dihydroxy-3-methylbutanoate = 3-methyl-2-oxobutanoate + H2O. The enzyme catalyses (2R,3R)-2,3-dihydroxy-3-methylpentanoate = (S)-3-methyl-2-oxopentanoate + H2O. It functions in the pathway amino-acid biosynthesis; L-isoleucine biosynthesis; L-isoleucine from 2-oxobutanoate: step 3/4. Its pathway is amino-acid biosynthesis; L-valine biosynthesis; L-valine from pyruvate: step 3/4. Its function is as follows. Functions in the biosynthesis of branched-chain amino acids. Catalyzes the dehydration of (2R,3R)-2,3-dihydroxy-3-methylpentanoate (2,3-dihydroxy-3-methylvalerate) into 2-oxo-3-methylpentanoate (2-oxo-3-methylvalerate) and of (2R)-2,3-dihydroxy-3-methylbutanoate (2,3-dihydroxyisovalerate) into 2-oxo-3-methylbutanoate (2-oxoisovalerate), the penultimate precursor to L-isoleucine and L-valine, respectively. This chain is Dihydroxy-acid dehydratase, found in Brucella anthropi (strain ATCC 49188 / DSM 6882 / CCUG 24695 / JCM 21032 / LMG 3331 / NBRC 15819 / NCTC 12168 / Alc 37) (Ochrobactrum anthropi).